The sequence spans 123 residues: WAP four-disulfide core domain protein 5 (123 aa).

Positions 1 to 24 (MRIQSLLLLGALLAVGSQLPAVFG) are cleaved as a signal peptide. WAP domains lie at 27–73 (KGEK…CVPR) and 74–121 (VSVK…RDPA). Disulfide bonds link Cys-34/Cys-62, Cys-41/Cys-66, Cys-49/Cys-61, Cys-55/Cys-70, Cys-81/Cys-109, Cys-88/Cys-113, Cys-96/Cys-108, and Cys-102/Cys-117.

Its subcellular location is the secreted. Its function is as follows. Putative acid-stable proteinase inhibitor. This chain is WAP four-disulfide core domain protein 5 (WFDC5), found in Pongo abelii (Sumatran orangutan).